We begin with the raw amino-acid sequence, 579 residues long: PCNA-interacting partner (579 aa).

Residues T480 to S543 form a disordered region. Residues H486–S496 are compositionally biased toward basic and acidic residues.

It belongs to the PARI family. Interacts with RAD51 and PCNA. Interacts with PARP1. Interacts with TASOR. In terms of tissue distribution, restricted to testis. Overexpressed in multiple cancer cells.

The protein resides in the cytoplasm. Its subcellular location is the nucleus. Required to suppress inappropriate homologous recombination, thereby playing a central role DNA repair and in the maintenance of genomic stability. Antagonizes homologous recombination by interfering with the formation of the RAD51-DNA homologous recombination structure. Binds single-strand DNA and poly(A) homopolymers. Positively regulate the poly(ADP-ribosyl)ation activity of PARP1; however such function may be indirect. In Homo sapiens (Human), this protein is PCNA-interacting partner (PARPBP).